The sequence spans 581 residues: Ras-specific guanine nucleotide-releasing factor RalGPS1 (581 aa).

A disordered region spans residues 1 to 31; the sequence is MYRRNGLPASVSITSRNTQDSSSSESLDGRS. Residues 49 to 288 enclose the Ras-GEF domain; sequence TPEEFASQIT…YSLSLKIEPG (240 aa). The disordered stretch occupies residues 320-339; sequence PDTSVVAHLPTPPPARHRKS. The short motif at 329-332 is the PXXP element; the sequence is PTPP. In terms of domain architecture, PH spans 455 to 567; the sequence is SITIEGPLRR…WHRHLAEACR (113 aa).

The protein localises to the cytoplasm. It is found in the cell membrane. Guanine nucleotide exchange factor. May be involved in cytoskeletal organization. The chain is Ras-specific guanine nucleotide-releasing factor RalGPS1 (ralgps1) from Danio rerio (Zebrafish).